The primary structure comprises 115 residues: Hydrogenase maturation factor HypA (115 aa).

Position 2 (His2) interacts with Ni(2+). Zn(2+) is bound by residues Cys73, Cys76, Cys89, and Cys92.

This sequence belongs to the HypA/HybF family.

Its function is as follows. Involved in the maturation of [NiFe] hydrogenases. Required for nickel insertion into the metal center of the hydrogenase. This chain is Hydrogenase maturation factor HypA, found in Parabacteroides distasonis (strain ATCC 8503 / DSM 20701 / CIP 104284 / JCM 5825 / NCTC 11152).